The primary structure comprises 160 residues: Ribosomal RNA large subunit methyltransferase H (160 aa).

Residues Leu-76, Gly-108, and 127 to 132 contribute to the S-adenosyl-L-methionine site; that span reads LGELTW.

Belongs to the RNA methyltransferase RlmH family. Homodimer.

The protein localises to the cytoplasm. The catalysed reaction is pseudouridine(1915) in 23S rRNA + S-adenosyl-L-methionine = N(3)-methylpseudouridine(1915) in 23S rRNA + S-adenosyl-L-homocysteine + H(+). In terms of biological role, specifically methylates the pseudouridine at position 1915 (m3Psi1915) in 23S rRNA. This chain is Ribosomal RNA large subunit methyltransferase H, found in Brucella anthropi (strain ATCC 49188 / DSM 6882 / CCUG 24695 / JCM 21032 / LMG 3331 / NBRC 15819 / NCTC 12168 / Alc 37) (Ochrobactrum anthropi).